We begin with the raw amino-acid sequence, 130 residues long: Ribosome-binding factor A (130 aa).

This sequence belongs to the RbfA family. In terms of assembly, monomer. Binds 30S ribosomal subunits, but not 50S ribosomal subunits or 70S ribosomes.

It localises to the cytoplasm. Its function is as follows. One of several proteins that assist in the late maturation steps of the functional core of the 30S ribosomal subunit. Associates with free 30S ribosomal subunits (but not with 30S subunits that are part of 70S ribosomes or polysomes). Required for efficient processing of 16S rRNA. May interact with the 5'-terminal helix region of 16S rRNA. This chain is Ribosome-binding factor A, found in Lachnospira eligens (strain ATCC 27750 / DSM 3376 / VPI C15-48 / C15-B4) (Eubacterium eligens).